Here is a 572-residue protein sequence, read N- to C-terminus: Proline--tRNA ligase (572 aa).

The protein belongs to the class-II aminoacyl-tRNA synthetase family. ProS type 1 subfamily. Homodimer.

It is found in the cytoplasm. The enzyme catalyses tRNA(Pro) + L-proline + ATP = L-prolyl-tRNA(Pro) + AMP + diphosphate. Functionally, catalyzes the attachment of proline to tRNA(Pro) in a two-step reaction: proline is first activated by ATP to form Pro-AMP and then transferred to the acceptor end of tRNA(Pro). As ProRS can inadvertently accommodate and process non-cognate amino acids such as alanine and cysteine, to avoid such errors it has two additional distinct editing activities against alanine. One activity is designated as 'pretransfer' editing and involves the tRNA(Pro)-independent hydrolysis of activated Ala-AMP. The other activity is designated 'posttransfer' editing and involves deacylation of mischarged Ala-tRNA(Pro). The misacylated Cys-tRNA(Pro) is not edited by ProRS. This is Proline--tRNA ligase from Dichelobacter nodosus (strain VCS1703A).